Reading from the N-terminus, the 193-residue chain is Large ribosomal subunit protein bL9 (193 aa).

The tract at residues 155-193 (AEGETLTSAEAIYDIQEKPLAENQEEMNDNDANSINEQA) is disordered. Residues 184-193 (NDANSINEQA) show a composition bias toward polar residues.

It belongs to the bacterial ribosomal protein bL9 family.

Its function is as follows. Binds to the 23S rRNA. This Bartonella quintana (strain Toulouse) (Rochalimaea quintana) protein is Large ribosomal subunit protein bL9.